The chain runs to 456 residues: Adenylosuccinate lyase (456 aa).

Residues 15–16 and 90–92 contribute to the N(6)-(1,2-dicarboxyethyl)-AMP site; these read RY and NHD. Lysine 94 carries the post-translational modification N6-acetyllysine. 122 to 123 contacts N(6)-(1,2-dicarboxyethyl)-AMP; sequence TS. Histidine 171 (proton donor/acceptor) is an active-site residue. Residue glutamine 247 coordinates N(6)-(1,2-dicarboxyethyl)-AMP. The active-site Proton donor/acceptor is serine 295. N(6)-(1,2-dicarboxyethyl)-AMP contacts are provided by residues serine 296, 301 to 303, asparagine 309, arginine 335, and 340 to 344; these read KVN and STVLR. Residue lysine 366 is modified to N6-acetyllysine.

It belongs to the lyase 1 family. Adenylosuccinate lyase subfamily. Homotetramer. Residues from neighboring subunits contribute catalytic and substrate-binding residues to each active site.

The catalysed reaction is N(6)-(1,2-dicarboxyethyl)-AMP = fumarate + AMP. It catalyses the reaction (2S)-2-[5-amino-1-(5-phospho-beta-D-ribosyl)imidazole-4-carboxamido]succinate = 5-amino-1-(5-phospho-beta-D-ribosyl)imidazole-4-carboxamide + fumarate. Its pathway is purine metabolism; AMP biosynthesis via de novo pathway; AMP from IMP: step 2/2. It functions in the pathway purine metabolism; IMP biosynthesis via de novo pathway; 5-amino-1-(5-phospho-D-ribosyl)imidazole-4-carboxamide from 5-amino-1-(5-phospho-D-ribosyl)imidazole-4-carboxylate: step 2/2. Functionally, catalyzes two reactions in de novo purine nucleotide biosynthesis. Catalyzes the breakdown of 5-aminoimidazole- (N-succinylocarboxamide) ribotide (SAICAR or 2-[5-amino-1-(5-phospho-beta-D-ribosyl)imidazole-4-carboxamido]succinate) to 5-aminoimidazole-4-carboxamide ribotide (AICAR or 5-amino-1-(5-phospho-beta-D-ribosyl)imidazole-4-carboxamide) and fumarate, and of adenylosuccinate (ADS or N(6)-(1,2-dicarboxyethyl)-AMP) to adenosine monophosphate (AMP) and fumarate. This chain is Adenylosuccinate lyase (purB), found in Escherichia coli O6:H1 (strain CFT073 / ATCC 700928 / UPEC).